Reading from the N-terminus, the 89-residue chain is Small ribosomal subunit protein uS14A (89 aa).

Belongs to the universal ribosomal protein uS14 family. Part of the 30S ribosomal subunit. Contacts proteins S3 and S10.

Binds 16S rRNA, required for the assembly of 30S particles and may also be responsible for determining the conformation of the 16S rRNA at the A site. This chain is Small ribosomal subunit protein uS14A, found in Levilactobacillus brevis (strain ATCC 367 / BCRC 12310 / CIP 105137 / JCM 1170 / LMG 11437 / NCIMB 947 / NCTC 947) (Lactobacillus brevis).